The primary structure comprises 340 residues: Ketol-acid reductoisomerase (NADP(+)) (340 aa).

The KARI N-terminal Rossmann domain maps to 2–182 (ANIYYENHAD…GCTRAGVIET (181 aa)). NADP(+)-binding positions include 25–28 (FGSQ), serine 51, serine 53, and 83–86 (DTAQ). Histidine 108 is a catalytic residue. NADP(+) is bound at residue glycine 134. Residues 183-328 (TFAEETETDL…RELRRMMPFV (146 aa)) form the KARI C-terminal knotted domain. The Mg(2+) site is built by aspartate 191, glutamate 195, glutamate 227, and glutamate 231. Substrate is bound at residue serine 252.

This sequence belongs to the ketol-acid reductoisomerase family. Requires Mg(2+) as cofactor.

The enzyme catalyses (2R)-2,3-dihydroxy-3-methylbutanoate + NADP(+) = (2S)-2-acetolactate + NADPH + H(+). It catalyses the reaction (2R,3R)-2,3-dihydroxy-3-methylpentanoate + NADP(+) = (S)-2-ethyl-2-hydroxy-3-oxobutanoate + NADPH + H(+). It participates in amino-acid biosynthesis; L-isoleucine biosynthesis; L-isoleucine from 2-oxobutanoate: step 2/4. Its pathway is amino-acid biosynthesis; L-valine biosynthesis; L-valine from pyruvate: step 2/4. Involved in the biosynthesis of branched-chain amino acids (BCAA). Catalyzes an alkyl-migration followed by a ketol-acid reduction of (S)-2-acetolactate (S2AL) to yield (R)-2,3-dihydroxy-isovalerate. In the isomerase reaction, S2AL is rearranged via a Mg-dependent methyl migration to produce 3-hydroxy-3-methyl-2-ketobutyrate (HMKB). In the reductase reaction, this 2-ketoacid undergoes a metal-dependent reduction by NADPH to yield (R)-2,3-dihydroxy-isovalerate. The sequence is that of Ketol-acid reductoisomerase (NADP(+)) from Roseiflexus castenholzii (strain DSM 13941 / HLO8).